We begin with the raw amino-acid sequence, 465 residues long: MDLRAGRFDGQMTDDAAQFSSSIEFDKRIFKSDIKCNRAHTTMLIEEGIIPKESGKKILKALDKLEKEGIGALNLDPSFEDIHMALEDYVTKEIGDEAGFMHTAKSRNDQVCTDIRLTLKEEIENTISNIKSFIKTIVEMAKENTHTLFIAYTHLQHAQPTTFAHHLMAYANELRRDCERLIDTYKRVDMNPLGSAALTTTGFPINRERTTELLGFSKVMDNSIDGVSSRDFAAEAIFDYAMLSTTLGKISDEIVIWSSYEFRMVECSNQYSSTSSIMPQKKNPDIAELSRGKSTIAYGELMTVLSMIKGIPHSYNRDLQEVTPHLWNAIDNTNDILRIVHGMLSTLTINKDRTEELAGANFATATELADVMVREKNLPFRTAHRIVGRVVSEAIDDNITTHDIDNDYVNRVSVEVMGKPINLGEDLVKQALNPLRNVKSRTVIGGCAPEAVNDAIEKMEIFLNE.

This sequence belongs to the lyase 1 family. Argininosuccinate lyase subfamily.

The protein localises to the cytoplasm. It carries out the reaction 2-(N(omega)-L-arginino)succinate = fumarate + L-arginine. The protein operates within amino-acid biosynthesis; L-arginine biosynthesis; L-arginine from L-ornithine and carbamoyl phosphate: step 3/3. The polypeptide is Argininosuccinate lyase (Methanosphaera stadtmanae (strain ATCC 43021 / DSM 3091 / JCM 11832 / MCB-3)).